Here is a 63-residue protein sequence, read N- to C-terminus: Sec-independent protein translocase protein TatA (63 aa).

A helical membrane pass occupies residues 1–21; that stretch reads MGSFSMWHWLIVLVIVLLLFG. Positions 42–63 are disordered; that stretch reads GMTDDDAPDTAKTVDHKADETK. The segment covering 53–63 has biased composition (basic and acidic residues); that stretch reads KTVDHKADETK.

The protein belongs to the TatA/E family. The Tat system comprises two distinct complexes: a TatABC complex, containing multiple copies of TatA, TatB and TatC subunits, and a separate TatA complex, containing only TatA subunits. Substrates initially bind to the TatABC complex, which probably triggers association of the separate TatA complex to form the active translocon.

Its subcellular location is the cell inner membrane. Part of the twin-arginine translocation (Tat) system that transports large folded proteins containing a characteristic twin-arginine motif in their signal peptide across membranes. TatA could form the protein-conducting channel of the Tat system. This is Sec-independent protein translocase protein TatA from Rhizobium etli (strain CIAT 652).